The chain runs to 576 residues: Arginine--tRNA ligase (576 aa).

The 'HIGH' region signature appears at 122-132 (PNVAKQMHVGH).

The protein belongs to the class-I aminoacyl-tRNA synthetase family. Monomer.

The protein localises to the cytoplasm. The catalysed reaction is tRNA(Arg) + L-arginine + ATP = L-arginyl-tRNA(Arg) + AMP + diphosphate. The sequence is that of Arginine--tRNA ligase from Yersinia pseudotuberculosis serotype IB (strain PB1/+).